Reading from the N-terminus, the 519-residue chain is NADH-quinone oxidoreductase subunit C/D (519 aa).

Residues 1-138 (MSERIEIPAE…TNEEPVDTTQ (138 aa)) form an NADH dehydrogenase I subunit C region. The interval 159 to 519 (DEYIINIGPQ…VDYVVPDIDR (361 aa)) is NADH dehydrogenase I subunit D.

This sequence in the N-terminal section; belongs to the complex I 30 kDa subunit family. In the C-terminal section; belongs to the complex I 49 kDa subunit family. As to quaternary structure, NDH-1 is composed of 13 different subunits. Subunits NuoB, CD, E, F, and G constitute the peripheral sector of the complex.

The protein resides in the cell inner membrane. It carries out the reaction a quinone + NADH + 5 H(+)(in) = a quinol + NAD(+) + 4 H(+)(out). Its function is as follows. NDH-1 shuttles electrons from NADH, via FMN and iron-sulfur (Fe-S) centers, to quinones in the respiratory chain. The immediate electron acceptor for the enzyme in this species is believed to be a menaquinone. Couples the redox reaction to proton translocation (for every two electrons transferred, four hydrogen ions are translocated across the cytoplasmic membrane), and thus conserves the redox energy in a proton gradient. The protein is NADH-quinone oxidoreductase subunit C/D of Phocaeicola vulgatus (strain ATCC 8482 / DSM 1447 / JCM 5826 / CCUG 4940 / NBRC 14291 / NCTC 11154) (Bacteroides vulgatus).